The primary structure comprises 441 residues: uncharacterized protein (441 aa).

Low complexity predominate over residues 121-143; sequence TLSPSIVSEQQQQQQQQQQQQQQ. Disordered stretches follow at residues 121 to 146 and 371 to 392; these read TLSPSIVSEQQQQQQQQQQQQQQAIS and SDADTDSDSEHPTSAPSTTAPN. A compositionally biased stretch (polar residues) spans 382–391; it reads PTSAPSTTAP.

This is an uncharacterized protein from Dictyostelium discoideum (Social amoeba).